The primary structure comprises 35 residues: Cytochrome c-550 (35 aa).

Positions 17, 20, and 21 each coordinate heme c.

Post-translationally, binds 1 heme c group covalently per subunit.

In terms of biological role, monoheme cytochrome which functions as an electron carrier in the reduction of nitrite by membrane vesicles. This Virgibacillus halodenitrificans (Bacillus halodenitrificans) protein is Cytochrome c-550.